The sequence spans 257 residues: UPF0246 protein A1S_2267 (257 aa).

Belongs to the UPF0246 family.

This Acinetobacter baumannii (strain ATCC 17978 / DSM 105126 / CIP 53.77 / LMG 1025 / NCDC KC755 / 5377) protein is UPF0246 protein A1S_2267.